The sequence spans 264 residues: Type III pantothenate kinase 2 (264 aa).

Position 6 to 13 (6 to 13) interacts with ATP; sequence DVGNTFTV. Residues tyrosine 100 and 107–110 each bind substrate; that span reads GADR. The active-site Proton acceptor is the aspartate 109. A K(+)-binding site is contributed by aspartate 129. Residue threonine 132 coordinates ATP. Threonine 184 provides a ligand contact to substrate.

Belongs to the type III pantothenate kinase family. Homodimer. It depends on NH4(+) as a cofactor. Requires K(+) as cofactor.

It localises to the cytoplasm. It carries out the reaction (R)-pantothenate + ATP = (R)-4'-phosphopantothenate + ADP + H(+). The protein operates within cofactor biosynthesis; coenzyme A biosynthesis; CoA from (R)-pantothenate: step 1/5. Catalyzes the phosphorylation of pantothenate (Pan), the first step in CoA biosynthesis. The protein is Type III pantothenate kinase 2 of Symbiobacterium thermophilum (strain DSM 24528 / JCM 14929 / IAM 14863 / T).